Reading from the N-terminus, the 202-residue chain is CASP-like protein 2B2 (202 aa).

Residues 1–29 (MSYLGVGVSPGNVPVYHGMNLKVIDRRVR) are Cytoplasmic-facing. The chain crosses the membrane as a helical span at residues 30-50 (LAELVLRCVICALGVLAAVLV). The Extracellular portion of the chain corresponds to 51–72 (GTDTQVKEIFSIQKKARFTDMK). A helical membrane pass occupies residues 73 to 93 (ALVFLVVANGIAAAYSLVQGV). Residues 94–118 (RCVVGMVKGSVLFSKPLAWVIFSGD) lie on the Cytoplasmic side of the membrane. Residues 119–139 (QMMAYLTLSAVAAAVQSASFA) traverse the membrane as a helical segment. Residues 140–164 (KLGQPDLQWMKICNMYGKFCNQVGE) lie on the Extracellular side of the membrane. A helical membrane pass occupies residues 165 to 185 (GIASALLVSVSMVVLSCISSF). Residues 186-202 (SLFRLYGGNKGKDGARW) lie on the Cytoplasmic side of the membrane.

It belongs to the Casparian strip membrane proteins (CASP) family. Homodimer and heterodimers.

Its subcellular location is the cell membrane. The protein is CASP-like protein 2B2 of Populus trichocarpa (Western balsam poplar).